Reading from the N-terminus, the 674-residue chain is DNA ligase (674 aa).

Residues 35 to 39, 84 to 85, and glutamate 118 contribute to the NAD(+) site; these read DYDFD and SL. Lysine 120 functions as the N6-AMP-lysine intermediate in the catalytic mechanism. Arginine 141, glutamate 184, lysine 297, and lysine 321 together coordinate NAD(+). Cysteine 415, cysteine 418, cysteine 433, and cysteine 439 together coordinate Zn(2+). The region spanning 598 to 674 is the BRCT domain; sequence LVNTNFEGLT…ITEDEFDALL (77 aa).

Belongs to the NAD-dependent DNA ligase family. LigA subfamily. Requires Mg(2+) as cofactor. Mn(2+) is required as a cofactor.

It carries out the reaction NAD(+) + (deoxyribonucleotide)n-3'-hydroxyl + 5'-phospho-(deoxyribonucleotide)m = (deoxyribonucleotide)n+m + AMP + beta-nicotinamide D-nucleotide.. DNA ligase that catalyzes the formation of phosphodiester linkages between 5'-phosphoryl and 3'-hydroxyl groups in double-stranded DNA using NAD as a coenzyme and as the energy source for the reaction. It is essential for DNA replication and repair of damaged DNA. This Chlorobium phaeovibrioides (strain DSM 265 / 1930) (Prosthecochloris vibrioformis (strain DSM 265)) protein is DNA ligase.